The sequence spans 501 residues: MTVQSIMFQGTASDAGKSWLAAAVCRILANRGQKVAPFKSQNMALNSFITEKGDEMGRAQVFQAEAAKVKPDVRMNPILLKPSTDKDSQVIVMGKVLKNMDAVSYYQFKRELIPQIMMAYNTLADENDVIVLEGAGSPAEINLNENDIVNMGMARMADAPVILVADIDKGGVFASIYGTIKLMPREDQQRIKGIIINKFRGDKSLLESGNKMIEKLTGIPVIGVLPMSSIDIDEEDSVSLIRKPRQKDTQKDLDVAVIDLDKISNFTDIHSLEIQPDVSVRYVLTAEELGTPDLLIIPGSKNTNADLVALRKNGIAEGILRAHKDGSMIVGICGGYQILGQMLYDPTGIESPIKEQKGLGLLDTETTFNEKKTTTQAVAKRNNYILKGYEIHMGTTKRGLNSTPFSTIQETNGQPENREDGAVSTDGTVIGTYLHGIFDNPYWTRHLLNQLRVAKGMAPLVDTTVSISGYKDQQYEKLAQLFAQNVDMDKFNQILQDSTKE.

One can recognise a GATase cobBQ-type domain in the interval 252 to 443; it reads DLDVAVIDLD…LHGIFDNPYW (192 aa). C333 serves as the catalytic Nucleophile. The active site involves H435.

It belongs to the CobB/CobQ family. CobQ subfamily.

It participates in cofactor biosynthesis; adenosylcobalamin biosynthesis. Functionally, catalyzes amidations at positions B, D, E, and G on adenosylcobyrinic A,C-diamide. NH(2) groups are provided by glutamine, and one molecule of ATP is hydrogenolyzed for each amidation. The chain is Cobyric acid synthase from Limosilactobacillus reuteri (strain DSM 20016) (Lactobacillus reuteri).